The chain runs to 464 residues: 3-isopropylmalate dehydratase large subunit (464 aa).

Positions 345, 405, and 408 each coordinate [4Fe-4S] cluster.

It belongs to the aconitase/IPM isomerase family. LeuC type 1 subfamily. In terms of assembly, heterodimer of LeuC and LeuD. It depends on [4Fe-4S] cluster as a cofactor.

It catalyses the reaction (2R,3S)-3-isopropylmalate = (2S)-2-isopropylmalate. It participates in amino-acid biosynthesis; L-leucine biosynthesis; L-leucine from 3-methyl-2-oxobutanoate: step 2/4. Functionally, catalyzes the isomerization between 2-isopropylmalate and 3-isopropylmalate, via the formation of 2-isopropylmaleate. The sequence is that of 3-isopropylmalate dehydratase large subunit from Bacteroides thetaiotaomicron (strain ATCC 29148 / DSM 2079 / JCM 5827 / CCUG 10774 / NCTC 10582 / VPI-5482 / E50).